We begin with the raw amino-acid sequence, 325 residues long: ATP synthase gamma chain (325 aa).

This sequence belongs to the ATPase gamma chain family. In terms of assembly, F-type ATPases have 2 components, CF(1) - the catalytic core - and CF(0) - the membrane proton channel. CF(1) has five subunits: alpha(3), beta(3), gamma(1), delta(1), epsilon(1). CF(0) has three main subunits: a, b and c.

The protein resides in the cell membrane. Produces ATP from ADP in the presence of a proton gradient across the membrane. The gamma chain is believed to be important in regulating ATPase activity and the flow of protons through the CF(0) complex. The protein is ATP synthase gamma chain of Corynebacterium glutamicum (strain R).